The chain runs to 462 residues: Cleavage and polyadenylation specificity factor subunit 7 (462 aa).

Disordered stretches follow at residues 34 to 68 and 161 to 213; these read VLTAASQPSDDRSSSTEPPPPVRQEPAPKPNNKTP and TRQN…PSVL. The span at 50-62 shows a compositional bias: pro residues; that stretch reads EPPPPVRQEPAPK. The RRM domain maps to 82–162; sequence AAVYVGSFSW…EKVDVRPATR (81 aa). The span at 181-190 shows a compositional bias: basic and acidic residues; that stretch reads HSRDSSDSAD. Position 194 is a phosphothreonine (Thr-194). At Ser-196 the chain carries Phosphoserine. Lys-345 is covalently cross-linked (Glycyl lysine isopeptide (Lys-Gly) (interchain with G-Cter in SUMO2)). Residues 400-462 form a disordered region; the sequence is SVGASGSSSR…HRDRERDRHH (63 aa). Phosphoserine occurs at positions 404 and 414. The segment at 409 to 460 is arg/Ser-rich domain; the sequence is RKRHRSRERSPSRSRESSRRHRDLLHNEDRHDDYFQERNREHERHRDRERDR. 2 stretches are compositionally biased toward basic and acidic residues: residues 416–425 and 432–462; these read ERSPSRSRES and LLHNEDRHDDYFQERNREHERHRDRERDRHH.

This sequence belongs to the RRM CPSF6/7 family. As to quaternary structure, component of the cleavage factor Im (CFIm) complex which is a heterotetramer composed of two subunits of NUDT21/CPSF5 and two subunits of CPSF6 or CPSF7 or a heterodimer of CPSF6 and CPSF7. The cleavage factor Im (CFIm) complex associates with the CPSF and CSTF complexes to promote the assembly of the core mRNA 3'-processing machinery. Interacts with NUDT21/CPSF5. Interacts (via Arg/Ser-rich domain) with FIP1L1 (preferentially via unphosphorylated form and Arg/Glu/Asp-rich region); this interaction mediates, at least in part, the interaction between the CFIm and CPSF complexes and may be inhibited by CPSF7 hyper-phosphorylation. In terms of processing, phosphorylated. Asymmetrically dimethylated on arginine residues by PRMT1.

Its subcellular location is the nucleus. It is found in the cytoplasm. In terms of biological role, component of the cleavage factor Im (CFIm) complex that functions as an activator of the pre-mRNA 3'-end cleavage and polyadenylation processing required for the maturation of pre-mRNA into functional mRNAs. CFIm contributes to the recruitment of multiprotein complexes on specific sequences on the pre-mRNA 3'-end, so called cleavage and polyadenylation signals (pA signals). Most pre-mRNAs contain multiple pA signals, resulting in alternative cleavage and polyadenylation (APA) producing mRNAs with variable 3'-end formation. The CFIm complex acts as a key regulator of cleavage and polyadenylation site choice during APA through its binding to 5'-UGUA-3' elements localized in the 3'-untranslated region (UTR) for a huge number of pre-mRNAs. CPSF7 activates directly the mRNA 3'-processing machinery. Binds to pA signals in RNA substrates. This chain is Cleavage and polyadenylation specificity factor subunit 7, found in Rattus norvegicus (Rat).